Consider the following 429-residue polypeptide: Esterase/beta-lactamase LipL (429 aa).

The Acyl-ester intermediate role is filled by S88.

This sequence belongs to the beta-lactamase family.

The protein resides in the secreted. The protein localises to the cell wall. Its subcellular location is the cell membrane. It carries out the reaction a fatty acid ester + H2O = an aliphatic alcohol + a fatty acid + H(+). The enzyme catalyses an acetyl ester + H2O = an aliphatic alcohol + acetate + H(+). The catalysed reaction is a butanoate ester + H2O = an aliphatic alcohol + butanoate + H(+). It catalyses the reaction an octanoate ester + H2O = an aliphatic alcohol + octanoate + H(+). It carries out the reaction decanoate ester + H2O = decanoate + an aliphatic alcohol + H(+). The enzyme catalyses a dodecanoate ester + H2O = an aliphatic alcohol + dodecanoate + H(+). The catalysed reaction is a tetradecanoate ester + H2O = an aliphatic alcohol + tetradecanoate + H(+). It catalyses the reaction hexadecanoate ester + H2O = an aliphatic alcohol + hexadecanoate + H(+). It carries out the reaction octadecanoate ester + H2O = an aliphatic alcohol + octadecanoate + H(+). The enzyme catalyses a hexanoate ester + H2O = an aliphatic alcohol + hexanoate + H(+). The catalysed reaction is a beta-lactam + H2O = a substituted beta-amino acid. With respect to regulation, esterase and beta-lactamase activities are inhibited by the active site residue modifiers phenylmethanesulfonylflouride (PMSF) and diethylpyrocarbonate (DEPC). Its function is as follows. Shows both esterase and beta-lactamase activities, with a much higher activity against phenyl esters than against beta-lactams. Shows esterase activity against both long-chain and short-chain p-nitrophenol (pNP) esters, with a preference for shorter chain esters. Hydrolyzes substrates containing beta-lactam ring such as nitrocefin and ampicillin. Functions as an immunogen that activates both humoral and cell-mediated responses. This Mycobacterium tuberculosis (strain ATCC 25618 / H37Rv) protein is Esterase/beta-lactamase LipL.